Here is a 256-residue protein sequence, read N- to C-terminus: HTH-type transcriptional regulator PrtR (256 aa).

In terms of domain architecture, HTH cro/C1-type spans 16-69 (LKQAMAMRNLKQETLAEAAGVSQNTIHKLTSGKAQSTRKLIEIAAALGVSPVWL). The H-T-H motif DNA-binding region spans 27–46 (QETLAEAAGVSQNTIHKLTS).

Its function is as follows. Represses the promoter activity of the prtN gene. The polypeptide is HTH-type transcriptional regulator PrtR (prtR) (Pseudomonas aeruginosa (strain ATCC 15692 / DSM 22644 / CIP 104116 / JCM 14847 / LMG 12228 / 1C / PRS 101 / PAO1)).